The sequence spans 346 residues: tRNA N6-adenosine threonylcarbamoyltransferase (346 aa).

Positions 111 and 115 each coordinate Fe cation. Substrate contacts are provided by residues 134 to 138, Asp-167, Gly-180, and Asn-279; that span reads LVSGG. Asp-307 is a binding site for Fe cation.

Belongs to the KAE1 / TsaD family. The cofactor is Fe(2+).

It is found in the cytoplasm. It catalyses the reaction L-threonylcarbamoyladenylate + adenosine(37) in tRNA = N(6)-L-threonylcarbamoyladenosine(37) in tRNA + AMP + H(+). Its function is as follows. Required for the formation of a threonylcarbamoyl group on adenosine at position 37 (t(6)A37) in tRNAs that read codons beginning with adenine. Is involved in the transfer of the threonylcarbamoyl moiety of threonylcarbamoyl-AMP (TC-AMP) to the N6 group of A37, together with TsaE and TsaB. TsaD likely plays a direct catalytic role in this reaction. This is tRNA N6-adenosine threonylcarbamoyltransferase from Burkholderia pseudomallei (strain 1106a).